Reading from the N-terminus, the 182-residue chain is Ribosome-recycling factor (182 aa).

Belongs to the RRF family.

The protein resides in the cytoplasm. Responsible for the release of ribosomes from messenger RNA at the termination of protein biosynthesis. May increase the efficiency of translation by recycling ribosomes from one round of translation to another. The polypeptide is Ribosome-recycling factor (Cyanothece sp. (strain PCC 7425 / ATCC 29141)).